The primary structure comprises 594 residues: Cytosolic Fe-S cluster assembly factor NAR1 (594 aa).

Cys20, Cys88, Cys91, Cys94, Cys209, and Cys264 together coordinate [4Fe-4S] cluster. Positions 444–465 are disordered; sequence RRARMSKSEDSSGASASSMAPA. Over residues 454–465 the composition is skewed to low complexity; it reads SSGASASSMAPA. [4Fe-4S] cluster-binding residues include Cys481 and Cys485. Residues 492–511 are disordered; the sequence is IAAPAPTSTPPAAPAPAHAA.

This sequence belongs to the NARF family.

Component of the cytosolic Fe/S protein assembly machinery. Required for maturation of extramitochondrial Fe/S proteins. May play a role in the transfer of pre-assembled Fe/S clusters to target apoproteins. In Lodderomyces elongisporus (strain ATCC 11503 / CBS 2605 / JCM 1781 / NBRC 1676 / NRRL YB-4239) (Yeast), this protein is Cytosolic Fe-S cluster assembly factor NAR1 (NAR1).